Here is a 119-residue protein sequence, read N- to C-terminus: uncharacterized protein (119 aa).

3 consecutive transmembrane segments (helical) span residues 28–48 (AWTT…HLVF), 55–75 (IEVV…NLAI), and 80–100 (PIGK…GIIV).

This sequence to M.tuberculosis Rv1342c.

The protein resides in the cell membrane. This is an uncharacterized protein from Mycobacterium leprae (strain TN).